We begin with the raw amino-acid sequence, 763 residues long: MSELLSVALFLASVLIYAWKAGRNTWWFAATLTVLGLFVILNITLYASDYFTGDGINDAVLYTLTNSLTGAGVGKYILPGIGIALALVAVFGALGWVLRRRRHHPHHVGYSLLALLLALGSVDASPAFRQITELVKSQMRDGDPDFAVYYKEPAKTIPHPKLNLVYIYGESLERTYFDNDAFPNLTPELGALKNEGLDFSHTMQLPGTDYTIAGMVASQCGIPLFAPFEGNASASVSSFFPQNICLGDILKNSGYQNYFVQGANLRFAGKDVFLKSHGFDHLYGAEELKTVVADPSYRNDWGFYDDTVLDEAWKKFEALSRSGQRFSLFTLTVDTHHPDGFISRTCNRKRYDYDGKPNQSFSTVSCSQENIAEFINKIKASPWFKDTVIVVSSDHLAMNNTAWKYLNKQDRNNLFFILRGDKPQQETLAVKRNTMDNGATVLDILGGDNFIGLGRSSLSGQSLSEVFLNVKEKVLAMKPDIIRLWNFPKEIKDFTVDRDKNMIAFSGSHFRLPLLLRVSDKRVEPLPESEYSAPLRFQLADFAPRDNFVWIDRCYKMAQLWAPALALSTDWCVSQGQLGGQQTVQHVDKAQWQGKTAFKDTMIDMERYKGNVDTLKIVDNDIRYKADSFIFNVAGAPEEVKQFSGISRPESWGRWSNAQLGDEVKIEYKAPLPKKFDLVITAKAFGDNANRPIPVRVGNEEQTLVLGHDVSTITLHFNNPTDANTLVIAPPAPVSTNEGNILGHSPRKLGIGMVEIKVVNVES.

4 helical membrane-spanning segments follow: residues 4–19, 26–48, 76–98, and 110–132; these read LLSV…IYAW, WWFA…LYAS, YILP…GWVL, and YSLL…RQIT.

This sequence belongs to the OpgB family.

It localises to the cell inner membrane. The catalysed reaction is a phosphatidylglycerol + a membrane-derived-oligosaccharide D-glucose = a 1,2-diacyl-sn-glycerol + a membrane-derived-oligosaccharide 6-(glycerophospho)-D-glucose.. Its pathway is glycan metabolism; osmoregulated periplasmic glucan (OPG) biosynthesis. Transfers a phosphoglycerol residue from phosphatidylglycerol to the membrane-bound nascent glucan backbones. This is Phosphoglycerol transferase I from Salmonella typhi.